A 769-amino-acid polypeptide reads, in one-letter code: Neprilysin-21 (769 aa).

The Cytoplasmic segment spans residues 1 to 26 (MKPENGAATWHPAKRSCLGRLTTLET). The helical; Signal-anchor for type II membrane protein transmembrane segment at 27-47 (LLLVFLGLLITALLSVLFLWL) threads the bilayer. Topologically, residues 48–769 (WVLDGYKTFT…MNPERKCQVW (722 aa)) are extracellular. The N-linked (GlcNAc...) asparagine glycan is linked to Asn-69. The Peptidase M13 domain maps to 85–769 (VCTSRECVRL…MNPERKCQVW (685 aa)). Cystine bridges form between Cys-86-Cys-91, Cys-109-Cys-754, Cys-117-Cys-714, Cys-173-Cys-428, and Cys-638-Cys-766. 7 N-linked (GlcNAc...) asparagine glycosylation sites follow: Asn-221, Asn-240, Asn-272, Asn-307, Asn-356, Asn-412, and Asn-506. His-601 is a binding site for Zn(2+). Glu-602 is a catalytic residue. The Zn(2+) site is built by His-605 and Glu-663. Asp-667 acts as the Proton donor in catalysis. N-linked (GlcNAc...) asparagine glycosylation is found at Asn-684 and Asn-698.

It belongs to the peptidase M13 family. Zn(2+) is required as a cofactor.

The protein localises to the cell membrane. Probable cell surface protease. The protein is Neprilysin-21 (nep-21) of Caenorhabditis elegans.